A 328-amino-acid polypeptide reads, in one-letter code: MNNSAFTFQTLHPDTIMDALFEQGIRVDSGLTPLNSYENRVYQFQDEDRRRFVVKFYRPERWTADQILEEHQFALQLVNDEVPVAAPVAFNGQTLLNHQGFYFAVFPSVGGRQFEADNIDQMEAVGRYLGRMHQTGRKQLFIHRPTIGLNEYLIEPRKLFEDATLIPSGLKAAFLKATDELIAAVTAHWREDFTVLRLHGDCHAGNILWRDGPMFVDLDDARNGPAIQDLWMLLNGDKAEQRMQLETIIEAYEEFSEFDTAEIGLIEPLRAMRLVYYLAWLMRRWADPAFPKNFPWLTGEDYWLRQTATFIEQAKVLQEPPLQLTPMY.

Aspartate 201 functions as the Proton acceptor in the catalytic mechanism. Residues asparagine 206 and aspartate 217 each contribute to the Mg(2+) site. The active site involves aspartate 217.

This sequence belongs to the SrkA/RdoA protein kinase family. Monomer. Requires Mg(2+) as cofactor.

Its subcellular location is the cytoplasm. It catalyses the reaction L-seryl-[protein] + ATP = O-phospho-L-seryl-[protein] + ADP + H(+). The enzyme catalyses L-threonyl-[protein] + ATP = O-phospho-L-threonyl-[protein] + ADP + H(+). Its function is as follows. A protein kinase that phosphorylates Ser and Thr residues. Probably acts to suppress the effects of stress linked to accumulation of reactive oxygen species. Probably involved in the extracytoplasmic stress response. This Escherichia coli O157:H7 protein is Stress response kinase A.